The chain runs to 1090 residues: MLRYTRNALVLGSLVLLSGCDNGSSSSSSGNPDTPDNQDVVVRLPDVAVPGEAVTAVENQAVIHLVDIAGITSSSAADYSSKNLYLWNNETCDALSAPVADWNDVSTTPSGSDKYGPYWVIPLNKESGCINVIVRDGTDKLIDSDLRVAFGDFTDRTVSVIAGNSAVYDSRADAFRAAFGVALAEAHWVDKNTLLWPGGQDKPIVRLYYSHSSKVAADGEGKFTDRYLKLTPTTVSQQVSMRFPHLSSYAAFKLPDNANVDELLQGETVAIAAAEDGILISATQVQTAGVLDDAYAEAAEALSYGAQLADGGVTFRVWAPTAQQVDVVVYSADKKVIGSHPMTRDSASGAWSWQGGSDLKGAFYRYAMTVYHPQSRKVEQYEVTDPYAHSLSTNSEYSQVVDLNDSALKPDGWDNLTMPHAQKTKADLAKMTIHESHIRDLSAWDQTVPAELRGKYLALTAGDSNMVQHLKTLSASGVTHVELLPVFDLATVNEFSDKVADIQQPFSRLCEVNSAVKSSEFAGYCDSGSTVEEVLNQLKQSDSQDNPQVQALNTLVAQTDSYNWGYDPFHYTVPEGSYATDPEGTTRIKEFRTMIQAIKQDLGMNVIMDVVYNHTNAAGPTDRTSVLDKIVPWYYQRLNETTGSVESATCCSDSAPEHRMFAKLIADSLAVWTTDYKIDGFRFDLMGYHPKAQILSAWERIKALNPDIYFFGEGWDSNQSDRFEIASQINLKGTGIGTFSDRLRDSVRGGGPFDSGDALRQNQGIGSGAGVLPNELASLSDDQVRHLADLTRLGMAGNLADFVMIDKDGAAKKGSEIDYNGAPGGYAADPTEVVNYVSKHDNQTLWDMISYKASQEADLATRVRMQAVSLATVMLGQGIAFDQQGSELLRSKSFTRDSYDSGDWFNRVDYSLQDNNYNVGMPRISDDGSNYEVITRVKEMVATPGEAELKQMTAFYQELTELRKSSPLFTLGDGSAVMKRVDFRNTGSDQQAGLLVMTVDDGMKAGASLDSRLDGLVVAINAAPESRTLNEFAGETLQLSAIQQTAGENSLANGVQIAADGTVTLPAWSVAVLELPQGEAQGAGLPVSSK.

An N-terminal signal peptide occupies residues 1–19 (MLRYTRNALVLGSLVLLSG). Cys-20 is lipidated: N-palmitoyl cysteine. Cys-20 is lipidated: S-diacylglycerol cysteine. Asp-684 serves as the catalytic Nucleophile. The active-site Proton donor is the Glu-713.

It belongs to the glycosyl hydrolase 13 family. In terms of assembly, homotrimer.

The protein resides in the cell membrane. It carries out the reaction Hydrolysis of (1-&gt;6)-alpha-D-glucosidic linkages in pullulan, amylopectin and glycogen, and in the alpha- and beta-limit dextrins of amylopectin and glycogen.. The protein is Pullulanase (pulA) of Klebsiella pneumoniae.